The primary structure comprises 243 residues: Segregation and condensation protein A (243 aa).

This sequence belongs to the ScpA family. In terms of assembly, component of a cohesin-like complex composed of ScpA, ScpB and the Smc homodimer, in which ScpA and ScpB bind to the head domain of Smc. The presence of the three proteins is required for the association of the complex with DNA.

It is found in the cytoplasm. Participates in chromosomal partition during cell division. May act via the formation of a condensin-like complex containing Smc and ScpB that pull DNA away from mid-cell into both cell halves. The polypeptide is Segregation and condensation protein A (Staphylococcus epidermidis (strain ATCC 35984 / DSM 28319 / BCRC 17069 / CCUG 31568 / BM 3577 / RP62A)).